Reading from the N-terminus, the 200-residue chain is Tegument protein UL55 homolog (200 aa).

A compositionally biased stretch (basic and acidic residues) spans 1–20 (MLPANRAEHSSDAEPRDIGS). Residues 1-23 (MLPANRAEHSSDAEPRDIGSHGR) form a disordered region.

The protein belongs to the alphaherpesvirinae HHV-1 UL55 family.

The protein resides in the virion tegument. It localises to the host nucleus matrix. This is Tegument protein UL55 homolog from Equine herpesvirus 1 (strain Ab4p) (EHV-1).